A 316-amino-acid chain; its full sequence is Transaldolase (316 aa).

Residue Lys127 is the Schiff-base intermediate with substrate of the active site.

Belongs to the transaldolase family. Type 2 subfamily.

It is found in the cytoplasm. It carries out the reaction D-sedoheptulose 7-phosphate + D-glyceraldehyde 3-phosphate = D-erythrose 4-phosphate + beta-D-fructose 6-phosphate. The protein operates within carbohydrate degradation; pentose phosphate pathway; D-glyceraldehyde 3-phosphate and beta-D-fructose 6-phosphate from D-ribose 5-phosphate and D-xylulose 5-phosphate (non-oxidative stage): step 2/3. In terms of biological role, transaldolase is important for the balance of metabolites in the pentose-phosphate pathway. The chain is Transaldolase from Helicobacter pylori (strain HPAG1).